We begin with the raw amino-acid sequence, 530 residues long: Cytochrome P450 monooxygenase apf7 (530 aa).

Residues 6–26 (VSPVSIWVFVIYAVTIIIAIY) form a helical membrane-spanning segment. N-linked (GlcNAc...) asparagine glycosylation occurs at N85. C464 contributes to the heme binding site.

The protein belongs to the cytochrome P450 family. It depends on heme as a cofactor.

The protein resides in the membrane. It functions in the pathway secondary metabolite biosynthesis. Its function is as follows. Cytochrome P450 monooxygenase; part of the gene cluster that mediates the biosynthesis of the cyclic tetrapeptide apicidin F (APF). The non-ribosomal peptide synthetase apf1 incorporates four different amino acids to produce apicidin F: L-phenylalanine, D-pipecolic acid (D-pip), N-methoxy-L-tryptophan and L-2-aminooctanedioic acid. L-Phenylalanine is the only proteinogenic amino acid directly used by apf1. The 3 other apf1 substrates are non-proteinogenic and have to be modified by other enzymes of the cluster. Lysine is converted to delta-1-pyrroline-5-carboxylate (P5C) which is reduced to L-pipecolic acid (L-pip) by apf3. L-pip is epimerized to D-pip, probably by apf1 activity, prior to incorporation. L-Tryptophan is N-oxidyzed by one of the cytochrome P450 monooxygenases (apf7 or apf8), and further methylated at the hydroxy group by the O-methyltransferase apf6 to yield N-methoxy-L-tryptophan. The synthesis of the fourth apf1 substrate is more complex. The fatty acid synthase apf5 is involved in the synthesis of the octanoic acid backbone of L-2-aminooctanedioic acid by fixing one acetyl-CoA unit and three malonyl-CoA units. Then one of the cytochrome P450 monooxygenases (apf7 or apf8) may oxidize this backbone to 2-oxooctanoic acid. The aminotransferase apf4 is predicted to catalyze the exchange of the keto group with an amino group. The next step would be the oxidation of 2-aminooctanoic acid by one of the cytochrome P450 monooxygenases (apf7 or apf8). The last step is the oxidation of 2-amino-8-hydroxyoctanoic acid to 2-aminooctanedioic acid is catalyzed by the FAD-dependent monooxygenase apf9. The chain is Cytochrome P450 monooxygenase apf7 from Gibberella fujikuroi (strain CBS 195.34 / IMI 58289 / NRRL A-6831) (Bakanae and foot rot disease fungus).